The chain runs to 519 residues: Developmental regulatory protein wetA (519 aa).

6 disordered regions span residues proline 105–serine 165, proline 270–aspartate 294, leucine 301–serine 320, glutamine 325–asparagine 344, serine 389–lysine 452, and leucine 470–lysine 495. Residues proline 108–proline 118 show a composition bias toward low complexity. Polar residues predominate over residues glutamine 155–serine 165. Polar residues predominate over residues leucine 301–tryptophan 315. Polar residues predominate over residues serine 389–leucine 400. Positions proline 419–lysine 428 are enriched in basic residues. Positions asparagine 435–lysine 452 are enriched in low complexity.

This sequence belongs to the wetA family.

Its function is as follows. BrlA, abaA and wetA are pivotal regulators of conidiophore development and conidium maturation. They act individually and together to regulate their own expression and that of numerous other sporulation-specific genes. The protein is Developmental regulatory protein wetA of Penicillium camembertii.